Reading from the N-terminus, the 764-residue chain is MIKDFFILDFSYEIKGNTPLVYIWSVDDEGNSSVVIDNNFRPYFYIIYEGNENEIIENIKKNCEALQITKVKRKYLGNIVDALLIQTSTPTQIKKCREKISELNNIKGIFDADIRYTMRYSLDFDLRPFTWFRAEVNEVKFDGFRTKKAYILDKILSHYEGNMPELRTIGVDFQIYSKYGSLNPRKDPIVVMSLWSKEGPMQFSLDEGIDDLKIIRRFVDYILNYDPDIIFVYDSDLLPWKYITERASSLGVKIDIGRKIGSEVSVGTYGHYSISGRLNVDLTGLLVNERSLGHVDLIDVSNYLGISPSRYSFKWYEISRYWDNEKNRRIIREYSIENARSIYLLGNYLLSTYSELVKIVGLPLDKLSVASWGNRIETSLIRTATKSGELIPIRMDNPNRPSKIKKNIIIQPKVGIYTDVYVLDISSVYSLVIRKFNIAPDTLVKEQCDDCYSSPISNYKFKREPSGLYKTFLDELSNVRDSNKIKVIEELISSFNDYVHWVNARWYSREIASAFDEFSNEIIRFIIDLIKSSGLDVILANDLLIFVTGGSRDKVNELITKINSLYNLDVKVKIFYKSLLVLDNNRYAGLSEGDKIDIARKGEEDMNLCELARNIKRKIIEEILISKDVKKAIKLVKSTVIKLRRGEFDNEELITWAKIERDLNEYNNQLPFVTAARKAIQSGYLISKDSKIGYVIVKGLGPLNDRAEPFFLVKEKNRIDIEYYVDQIFRETLKLLKPLGVNEESLKKTNITDILDLFGASKKK.

Belongs to the DNA polymerase type-B family.

It carries out the reaction DNA(n) + a 2'-deoxyribonucleoside 5'-triphosphate = DNA(n+1) + diphosphate. The sequence is that of DNA polymerase 3 (dpo3) from Saccharolobus solfataricus (strain ATCC 35092 / DSM 1617 / JCM 11322 / P2) (Sulfolobus solfataricus).